A 193-amino-acid polypeptide reads, in one-letter code: ATP-dependent Clp protease proteolytic subunit (193 aa).

Catalysis depends on Ser98, which acts as the Nucleophile. His123 is an active-site residue.

This sequence belongs to the peptidase S14 family. Fourteen ClpP subunits assemble into 2 heptameric rings which stack back to back to give a disk-like structure with a central cavity, resembling the structure of eukaryotic proteasomes.

The protein resides in the cytoplasm. The catalysed reaction is Hydrolysis of proteins to small peptides in the presence of ATP and magnesium. alpha-casein is the usual test substrate. In the absence of ATP, only oligopeptides shorter than five residues are hydrolyzed (such as succinyl-Leu-Tyr-|-NHMec, and Leu-Tyr-Leu-|-Tyr-Trp, in which cleavage of the -Tyr-|-Leu- and -Tyr-|-Trp bonds also occurs).. Cleaves peptides in various proteins in a process that requires ATP hydrolysis. Has a chymotrypsin-like activity. Plays a major role in the degradation of misfolded proteins. The protein is ATP-dependent Clp protease proteolytic subunit of Glaesserella parasuis serovar 5 (strain SH0165) (Haemophilus parasuis).